The sequence spans 454 residues: Nuclear envelope integral membrane protein (454 aa).

The N-terminal stretch at 1 to 18 (MHSAGLLMLTVAGYFTSG) is a signal peptide. A glycan (N-linked (GlcNAc...) asparagine) is linked at asparagine 38. Helical transmembrane passes span 138 to 158 (IPLDLWRLAQFAVGILILFSA), 166 to 186 (VFYYLVGIVIGICASLLVVIY), 197 to 217 (MMYGVLIGGWTIGFYVIKQLA), 231 to 251 (VLGYLVITGLISFLICYRIGP), and 280 to 300 (TSAVIFIMVLVFVAHYFPISW). Over residues 388–405 (SMDAAPEEESVEEPEEDK) the composition is skewed to acidic residues. Positions 388–454 (SMDAAPEEES…QEVDLRQVVQ (67 aa)) are disordered. Residues 414-424 (NSQFRYQQAAR) are compositionally biased toward polar residues. Acidic residues predominate over residues 428–446 (PEPESESDDSEEEEFFEQE).

Belongs to the NEMP family. As to quaternary structure, interacts with OTE. Expressed in both germline and somatic cells in the larval testis and prepupal ovary (at protein level). Also detected in the larval eye and larval wing disk (at protein level).

It localises to the nucleus inner membrane. Its function is as follows. Contributes to nuclear envelope stiffness in germ cells. Required for male and female fertility. This is Nuclear envelope integral membrane protein from Drosophila melanogaster (Fruit fly).